A 279-amino-acid chain; its full sequence is HTH-type transcriptional regulator HdfR (279 aa).

Residues methionine 1–threonine 58 enclose the HTH lysR-type domain. Residues phenylalanine 18–arginine 37 constitute a DNA-binding region (H-T-H motif).

Belongs to the LysR transcriptional regulatory family.

Functionally, negatively regulates the transcription of the flagellar master operon flhDC by binding to the upstream region of the operon. The polypeptide is HTH-type transcriptional regulator HdfR (Shigella boydii serotype 18 (strain CDC 3083-94 / BS512)).